Reading from the N-terminus, the 355-residue chain is MDSKSLAKSKRAHTLHHSKKSHSVHKPKVPGVSEKNPEKLQGNQTKSPVQSRRVSALPSNWDRYDDELDAAEDSSISLHSDVIVPKSKGADYLHLISEAQAESNSKIENNLDCLSSLDDLLHDEFSRVVGSMISARGEGILSWMEDDNFVVEEDGSGSYQEPGFLSLNLNVLAKTLENVDLHERLYIDPDLLPLPELNTSQTKVSRNEEPSHSHIAQNDPIVVPGESSVREAESLDQVKDILILTDESEKSSAIEADLDLLLNSFSEAHTQPNPVASASGKSSAFETELDSLLKSHSSTEQFNKPGNPSDQKIHMTGFNDVLDDLLESTPVSIIPQSNQTSSKVLDDFDSWLDTI.

2 disordered regions span residues 1–60 (MDSK…LPSN) and 296–315 (HSSTEQFNKPGNPSDQKIHM). Basic residues predominate over residues 7-28 (AKSKRAHTLHHSKKSHSVHKPK). 2 stretches are compositionally biased toward polar residues: residues 41-53 (QGNQTKSPVQSRR) and 296-310 (HSSTEQFNKPGNPSD).

Interacts with RST1. In terms of tissue distribution, expressed in taproots, lateral roots, root tips, leaf veins, cauline leaves, inflorescences, flowers, and siliques.

The protein localises to the cytoplasm. It is found in the cytosol. It localises to the endoplasmic reticulum. Together with RST1, acts as a cofactor of the cytoplasmic exosome and connects the cytosolic RNA exosome to the SKI complex. Acts as a post-transcriptional gene silencing (PTGS) suppressor. CER16/RIPR can, like RST1 suppress the production of small interfering RNAs (siRNAs) from the CER3 locus, which is involved in cuticule membrane and wax production, and in the typhine and sporopollenin biosynthesis of pollen. This chain is Protein ECERIFERUM 16, found in Arabidopsis thaliana (Mouse-ear cress).